We begin with the raw amino-acid sequence, 88 residues long: Small ribosomal subunit protein uS19 (88 aa).

It belongs to the universal ribosomal protein uS19 family.

In terms of biological role, protein S19 forms a complex with S13 that binds strongly to the 16S ribosomal RNA. The protein is Small ribosomal subunit protein uS19 (rpsS) of Chlamydia pneumoniae (Chlamydophila pneumoniae).